Here is a 381-residue protein sequence, read N- to C-terminus: Prostatic acid phosphatase (381 aa).

The N-terminal stretch at 1–31 is a signal peptide; the sequence is MRAVPLHLVGTASLTLGFLLLLSLRLDPGQA. Arg-42 serves as a coordination point for substrate. His-43 (nucleophile) is an active-site residue. Arg-46 contacts substrate. The N-linked (GlcNAc...) asparagine glycan is linked to Asn-93. Arg-110 lines the substrate pocket. 3 disulfide bridges follow: Cys-160-Cys-371, Cys-214-Cys-312, and Cys-346-Cys-350. The N-linked (GlcNAc...) asparagine glycan is linked to Asn-219. His-288 is a substrate binding site. The Proton donor role is filled by Asp-289. A glycan (N-linked (GlcNAc...) asparagine) is linked at Asn-332.

It belongs to the histidine acid phosphatase family. In terms of assembly, homodimer; dimer formation is required for phosphatase activity. N-glycosylated. As to expression, expressed in prostate epithelium. Also expressed in the pelvic nerve and sacral spinal cord. Localizes in peptidergic and non-peptidergic nociceptive (pain-sensing) neurons.

It localises to the secreted. The protein resides in the cell membrane. The protein localises to the lysosome membrane. It carries out the reaction a phosphate monoester + H2O = an alcohol + phosphate. The catalysed reaction is a ribonucleoside 5'-phosphate + H2O = a ribonucleoside + phosphate. The enzyme catalyses 1-(9Z-octadecenoyl)-sn-glycero-3-phosphate + H2O = 1-(9Z-octadecenoyl)-sn-glycerol + phosphate. It catalyses the reaction O-phospho-L-tyrosyl-[protein] + H2O = L-tyrosyl-[protein] + phosphate. Its activity is regulated as follows. Inhibited by L(+)-tartrate. Functionally, a non-specific tyrosine phosphatase that dephosphorylates a diverse number of substrates under acidic conditions (pH 4-6) including alkyl, aryl, and acyl orthophosphate monoesters and phosphorylated proteins. Has lipid phosphatase activity and inactivates lysophosphatidic acid in seminal plasma. In addition to its tyrosine phosphatase activity, also has ecto-5'-nucleotidase activity in dorsal root ganglion (DRG) neurons. Generates adenosine from AMP. This extracellular adenosine leads to a decrease in chronic pain by activating A1R in nociceptive neurons. The protein is Prostatic acid phosphatase (Acp3) of Rattus norvegicus (Rat).